A 768-amino-acid polypeptide reads, in one-letter code: Actin filament-associated protein 1-like 1 (768 aa).

Positions 82 to 145 (DLRDMPEDDG…GKSPEYISSH (64 aa)) are disordered. 4 positions are modified to phosphoserine: Ser-94, Ser-98, Ser-104, and Ser-153. Positions 173–211 (GELKSSYNDSDAMSSSYESYDEEEEEGKSPQPRHQWPSE) are disordered. Residues 177–190 (SSYNDSDAMSSSYE) are compositionally biased toward low complexity. In terms of domain architecture, PH 1 spans 220 to 316 (ECRICAFLLR…WLKVIREVSK (97 aa)). Ser-329 and Ser-343 each carry phosphoserine. One can recognise a PH 2 domain in the interval 418–512 (EVPCCGYLNV…WLGLLLVEMG (95 aa)). Residue Tyr-557 is modified to Phosphotyrosine. The tract at residues 566–604 (QDEEPERPTGAQVKRHASSCSEKSHRVDPQVKVKRHASS) is disordered. The segment covering 587–596 (EKSHRVDPQV) has biased composition (basic and acidic residues). Positions 611–700 (GKNRAEEDAR…VAVKERLQQS (90 aa)) form a coiled coil. Residues 705–768 (PALGLSVSSK…KAKEWEMKKT (64 aa)) form a disordered region. The span at 710-729 (SVSSKPKSGETANKPQNSVP) shows a compositional bias: polar residues. Ser-747 carries the post-translational modification Phosphoserine. A compositionally biased stretch (basic and acidic residues) spans 759 to 768 (KAKEWEMKKT).

In terms of assembly, interacts with CTTN. Expressed in breast, colon and brain. In all 3 tissues, expressed in the microvasculature (at protein level). In addition, in the breast, found in the contractile myoepithelial cell layer which surrounds the breast ducts (at protein level). In the colon, expressed in the mucous membrane and colonic crypts and in the smooth muscle cell layer which provide movement of the colon (at protein level). In the cerebellum, localized around the Purkinje neurons and the granule cells of the granular layer, but not inside cell bodies (at protein level). Outside of the cerebellar cortex, expressed in glial cells (at protein level). Highly expressed away from the cell bodies within the dentate nucleus (at protein level).

Its subcellular location is the cytoplasm. It is found in the cell projection. The protein resides in the podosome. It localises to the invadopodium. The protein localises to the cytoskeleton. Its subcellular location is the stress fiber. Its function is as follows. May be involved in podosome and invadosome formation. This is Actin filament-associated protein 1-like 1 (AFAP1L1) from Homo sapiens (Human).